Reading from the N-terminus, the 408-residue chain is Phosphoglycerate kinase (408 aa).

Residues 22-24 (DIN), Arg39, 60-63 (HQSR), Arg117, and Arg157 each bind substrate. ATP-binding positions include Glu332 and 358–361 (GGHT).

The protein belongs to the phosphoglycerate kinase family. As to quaternary structure, monomer.

The protein resides in the cytoplasm. It catalyses the reaction (2R)-3-phosphoglycerate + ATP = (2R)-3-phospho-glyceroyl phosphate + ADP. The protein operates within carbohydrate degradation; glycolysis; pyruvate from D-glyceraldehyde 3-phosphate: step 2/5. The polypeptide is Phosphoglycerate kinase (Thermoplasma volcanium (strain ATCC 51530 / DSM 4299 / JCM 9571 / NBRC 15438 / GSS1)).